The sequence spans 407 residues: 1-deoxy-D-xylulose 5-phosphate reductoisomerase (407 aa).

Residues T25, G26, S27, I28, N53, and N136 each contribute to the NADPH site. K137 lines the 1-deoxy-D-xylulose 5-phosphate pocket. E138 lines the NADPH pocket. D162 is a Mn(2+) binding site. S163, E164, S188, and H211 together coordinate 1-deoxy-D-xylulose 5-phosphate. E164 provides a ligand contact to Mn(2+). NADPH is bound at residue G217. Positions 224, 229, 230, and 233 each coordinate 1-deoxy-D-xylulose 5-phosphate. E233 serves as a coordination point for Mn(2+).

The protein belongs to the DXR family. Requires Mg(2+) as cofactor. Mn(2+) is required as a cofactor.

The enzyme catalyses 2-C-methyl-D-erythritol 4-phosphate + NADP(+) = 1-deoxy-D-xylulose 5-phosphate + NADPH + H(+). The protein operates within isoprenoid biosynthesis; isopentenyl diphosphate biosynthesis via DXP pathway; isopentenyl diphosphate from 1-deoxy-D-xylulose 5-phosphate: step 1/6. Its function is as follows. Catalyzes the NADPH-dependent rearrangement and reduction of 1-deoxy-D-xylulose-5-phosphate (DXP) to 2-C-methyl-D-erythritol 4-phosphate (MEP). The polypeptide is 1-deoxy-D-xylulose 5-phosphate reductoisomerase (Rhodopseudomonas palustris (strain BisB5)).